A 1015-amino-acid polypeptide reads, in one-letter code: Formate dehydrogenase, nitrate-inducible, major subunit (1015 aa).

A signal peptide (tat-type signal) is located at residues 1–33 (MDVSRRQFFKICAGGMAGTTVAALGFAPKQALA). The 4Fe-4S Mo/W bis-MGD-type domain maps to 43–106 (AKEIRNTCTY…GLLDYVNSEN (64 aa)). [4Fe-4S] cluster is bound by residues C50, C53, C57, and C92. U196 contacts Mo-bis(molybdopterin guanine dinucleotide). U196 is a non-standard amino acid (selenocysteine).

The protein belongs to the prokaryotic molybdopterin-containing oxidoreductase family. Trimer of heterotrimers, consisting of subunits alpha, beta and gamma. It depends on Mo-bis(molybdopterin guanine dinucleotide) as a cofactor. The cofactor is [4Fe-4S] cluster. Exported by the Tat system. The position of the signal peptide cleavage has not been experimentally proven.

The protein resides in the periplasm. It carries out the reaction a quinone + formate + H(+) = a quinol + CO2. Formate dehydrogenase allows E.coli to use formate as major electron donor during anaerobic respiration, when nitrate is used as electron acceptor. The alpha subunit FdnG contains the formate oxidation site. Electrons are transferred from formate to menaquinone in the gamma subunit (FdnI), through the 4Fe-4S clusters in the beta subunit (FdnH). Formate dehydrogenase-N is part of a system that generates proton motive force, together with the dissimilatory nitrate reductase (Nar). The sequence is that of Formate dehydrogenase, nitrate-inducible, major subunit (fdnG) from Escherichia coli (strain K12).